Consider the following 744-residue polypeptide: Vesicle-fusing ATPase (744 aa).

Residue lysine 105 is modified to N6-acetyllysine. Residue serine 207 is modified to Phosphoserine. The residue at position 259 (tyrosine 259) is a Phosphotyrosine. ATP contacts are provided by residues 505-510 and 545-552; these read NGIIKW and PHSGKTAL. Threonine 550 is a binding site for Mg(2+). Residue serine 569 is modified to Phosphoserine; by CDK16.

Belongs to the AAA ATPase family. In terms of assembly, homohexamer. Interacts with GABARAP and GABARAPL2. Interacts with GRIA2. Interacts with PLK2, leading to disrupt the interaction with GRIA2. Interacts with MUSK; may regulate MUSK endocytosis and activity. Interacts with CDK16. Requires Mg(2+) as cofactor. Post-translationally, phosphorylation at Ser-569 interferes with homohexamerization.

Its subcellular location is the cytoplasm. The catalysed reaction is ATP + H2O = ADP + phosphate + H(+). Required for vesicle-mediated transport. Catalyzes the fusion of transport vesicles within the Golgi cisternae. Is also required for transport from the endoplasmic reticulum to the Golgi stack. Seems to function as a fusion protein required for the delivery of cargo proteins to all compartments of the Golgi stack GRIA2 leads to influence GRIA2 membrane cycling. In Mus musculus (Mouse), this protein is Vesicle-fusing ATPase (Nsf).